The following is a 331-amino-acid chain: Protein RecA (331 aa).

61-68 lines the ATP pocket; it reads GPESSGKT.

It belongs to the RecA family.

The protein resides in the cytoplasm. In terms of biological role, can catalyze the hydrolysis of ATP in the presence of single-stranded DNA, the ATP-dependent uptake of single-stranded DNA by duplex DNA, and the ATP-dependent hybridization of homologous single-stranded DNAs. It interacts with LexA causing its activation and leading to its autocatalytic cleavage. The chain is Protein RecA from Mycoplasma mobile (strain ATCC 43663 / 163K / NCTC 11711) (Mesomycoplasma mobile).